The primary structure comprises 353 residues: MTAILERRESESLWGRFCNWITSTENRLYIGWFGVLMIPTLLTATSVFIIAFIAAPPVDIDGIREPVSGSLLYGNNIISGAIIPTSAAIGLHFYPIWEAASVDEWLYNGGPYELIVLHFLLGVACYMGREWELSFRLGMRPWIAVAYSAPVAAATAVFLIYPIGQGSFSDGMPLGISGTFNFMIVFQAEHNILMHPFHMLGVAGVFGGSLFSAMHGSLVTSSLIRETTENESANAGYRFGQEEETYNIVAAHGYFGRLIFQYASFNNSRSLHFFLAAWPVVGIWFTSLGISTMAFNLNGFNFNQSVVDSQGRVINTWADIINRANLGMEVMHERNAHNFPLDLAAIDAPSVNG.

Thr-2 carries the N-acetylthreonine modification. Thr-2 is subject to Phosphothreonine. 3 consecutive transmembrane segments (helical) span residues 29–46 (YIGW…TATS), 118–133 (HFLL…EWEL), and 142–156 (WIAV…AATA). His-118 is a chlorophyll a binding site. Tyr-126 contacts pheophytin a. 2 residues coordinate [CaMn4O5] cluster: Asp-170 and Glu-189. The chain crosses the membrane as a helical span at residues 197–218 (FHMLGVAGVFGGSLFSAMHGSL). Residue His-198 coordinates chlorophyll a. A quinone contacts are provided by residues His-215 and 264-265 (SF). His-215 is a Fe cation binding site. Fe cation is bound at residue His-272. A helical transmembrane segment spans residues 274–288 (FLAAWPVVGIWFTSL). 4 residues coordinate [CaMn4O5] cluster: His-332, Glu-333, Asp-342, and Ala-344. Positions 345-353 (AIDAPSVNG) are excised as a propeptide.

The protein belongs to the reaction center PufL/M/PsbA/D family. As to quaternary structure, PSII is composed of 1 copy each of membrane proteins PsbA, PsbB, PsbC, PsbD, PsbE, PsbF, PsbH, PsbI, PsbJ, PsbK, PsbL, PsbM, PsbT, PsbX, PsbY, PsbZ, Psb30/Ycf12, at least 3 peripheral proteins of the oxygen-evolving complex and a large number of cofactors. It forms dimeric complexes. The D1/D2 heterodimer binds P680, chlorophylls that are the primary electron donor of PSII, and subsequent electron acceptors. It shares a non-heme iron and each subunit binds pheophytin, quinone, additional chlorophylls, carotenoids and lipids. D1 provides most of the ligands for the Mn4-Ca-O5 cluster of the oxygen-evolving complex (OEC). There is also a Cl(-1) ion associated with D1 and D2, which is required for oxygen evolution. The PSII complex binds additional chlorophylls, carotenoids and specific lipids. serves as cofactor. Tyr-161 forms a radical intermediate that is referred to as redox-active TyrZ, YZ or Y-Z. In terms of processing, C-terminally processed by CTPA; processing is essential to allow assembly of the oxygen-evolving complex and thus photosynthetic growth.

The protein localises to the plastid. Its subcellular location is the chloroplast thylakoid membrane. The catalysed reaction is 2 a plastoquinone + 4 hnu + 2 H2O = 2 a plastoquinol + O2. Its function is as follows. Photosystem II (PSII) is a light-driven water:plastoquinone oxidoreductase that uses light energy to abstract electrons from H(2)O, generating O(2) and a proton gradient subsequently used for ATP formation. It consists of a core antenna complex that captures photons, and an electron transfer chain that converts photonic excitation into a charge separation. The D1/D2 (PsbA/PsbD) reaction center heterodimer binds P680, the primary electron donor of PSII as well as several subsequent electron acceptors. This is Photosystem II protein D1 from Coffea arabica (Arabian coffee).